The chain runs to 754 residues: Protein tyrosine phosphatase domain-containing protein 1 (754 aa).

Residues 82–253 form the Tyrosine-protein phosphatase domain; it reads YSSWVTDNIL…LTPLRNIFSC (172 aa). C190 functions as the Phosphocysteine intermediate in the catalytic mechanism. S392 and S394 each carry phosphoserine. A compositionally biased stretch (polar residues) spans 487–498; sequence SGAFSADVSGSH. The interval 487–554 is disordered; it reads SGAFSADVSG…PRSPLDCGSS (68 aa). Residue S547 is modified to Phosphoserine.

Belongs to the protein-tyrosine phosphatase family. Non-receptor class PTPDC1 subfamily.

In terms of biological role, may play roles in cilia formation and/or maintenance. In Homo sapiens (Human), this protein is Protein tyrosine phosphatase domain-containing protein 1 (PTPDC1).